We begin with the raw amino-acid sequence, 190 residues long: Elongation factor P-like protein (190 aa).

The protein belongs to the elongation factor P family.

The sequence is that of Elongation factor P-like protein from Salmonella gallinarum (strain 287/91 / NCTC 13346).